The sequence spans 455 residues: Probable cytosolic iron-sulfur protein assembly protein 1 (455 aa).

7 WD repeats span residues 31 to 70, 90 to 129, 163 to 202, 208 to 247, 253 to 292, 318 to 365, and 380 to 453; these read GHSS…TTSA, GHQR…DGSS, GHES…EFEC, EHSQ…DWFC, GHES…QCEA, YHDR…DEKS, and HASA…YAAT.

Belongs to the WD repeat CIA1 family.

Functionally, essential component of the cytosolic iron-sulfur (Fe/S) protein assembly machinery. Required for the maturation of extramitochondrial Fe/S proteins. The chain is Probable cytosolic iron-sulfur protein assembly protein 1 from Mycosarcoma maydis (Corn smut fungus).